The following is a 102-amino-acid chain: Large ribosomal subunit protein bL21 (102 aa).

The protein belongs to the bacterial ribosomal protein bL21 family. Part of the 50S ribosomal subunit. Contacts protein L20.

Its function is as follows. This protein binds to 23S rRNA in the presence of protein L20. This chain is Large ribosomal subunit protein bL21, found in Exiguobacterium sp. (strain ATCC BAA-1283 / AT1b).